A 94-amino-acid polypeptide reads, in one-letter code: Large ribosomal subunit protein bL27 (94 aa).

Residues 1 to 9 (MLRLDLQFF) constitute a propeptide that is removed on maturation.

The protein belongs to the bacterial ribosomal protein bL27 family. In terms of assembly, part of the 50S ribosomal subunit. Post-translationally, the N-terminus is cleaved by ribosomal processing cysteine protease Prp.

Plays a role in sporulation at high temperatures. The polypeptide is Large ribosomal subunit protein bL27 (rpmA) (Bacillus subtilis (strain 168)).